The following is a 150-amino-acid chain: Transcription antitermination protein NusB (150 aa).

It belongs to the NusB family.

Its function is as follows. Involved in transcription antitermination. Required for transcription of ribosomal RNA (rRNA) genes. Binds specifically to the boxA antiterminator sequence of the ribosomal RNA (rrn) operons. This chain is Transcription antitermination protein NusB, found in Streptococcus pyogenes serotype M3 (strain ATCC BAA-595 / MGAS315).